We begin with the raw amino-acid sequence, 432 residues long: Enolase (432 aa).

Gln167 contributes to the (2R)-2-phosphoglycerate binding site. Catalysis depends on Glu209, which acts as the Proton donor. Mg(2+) contacts are provided by Asp246, Glu290, and Asp317. (2R)-2-phosphoglycerate is bound by residues Lys342, Arg371, Ser372, and Lys393. Lys342 serves as the catalytic Proton acceptor.

Belongs to the enolase family. In terms of assembly, component of the RNA degradosome, a multiprotein complex involved in RNA processing and mRNA degradation. Mg(2+) is required as a cofactor.

The protein resides in the cytoplasm. It is found in the secreted. It localises to the cell surface. It carries out the reaction (2R)-2-phosphoglycerate = phosphoenolpyruvate + H2O. It functions in the pathway carbohydrate degradation; glycolysis; pyruvate from D-glyceraldehyde 3-phosphate: step 4/5. Functionally, catalyzes the reversible conversion of 2-phosphoglycerate (2-PG) into phosphoenolpyruvate (PEP). It is essential for the degradation of carbohydrates via glycolysis. In Salmonella agona (strain SL483), this protein is Enolase.